We begin with the raw amino-acid sequence, 61 residues long: Large ribosomal subunit protein uL30 (61 aa).

Belongs to the universal ribosomal protein uL30 family. In terms of assembly, part of the 50S ribosomal subunit.

In Petrotoga mobilis (strain DSM 10674 / SJ95), this protein is Large ribosomal subunit protein uL30.